Consider the following 464-residue polypeptide: Glutamate--tRNA ligase (464 aa).

The short motif at 9–19 (PSPTGYLHIGG) is the 'HIGH' region element. Positions 242 to 246 (KISKR) match the 'KMSKS' region motif. Lys245 provides a ligand contact to ATP.

Belongs to the class-I aminoacyl-tRNA synthetase family. Glutamate--tRNA ligase type 1 subfamily. Monomer.

The protein localises to the cytoplasm. The catalysed reaction is tRNA(Glu) + L-glutamate + ATP = L-glutamyl-tRNA(Glu) + AMP + diphosphate. Catalyzes the attachment of glutamate to tRNA(Glu) in a two-step reaction: glutamate is first activated by ATP to form Glu-AMP and then transferred to the acceptor end of tRNA(Glu). The chain is Glutamate--tRNA ligase from Neisseria meningitidis serogroup B (strain ATCC BAA-335 / MC58).